The chain runs to 221 residues: Ras-related protein RabS (221 aa).

16-23 (GDNQCGKS) serves as a coordination point for GTP. The short motif at 38 to 47 (GIQLWHGIEI) is the Effector region element. Residues 71–75 (DGNGG) and 137–140 (NKCD) contribute to the GTP site. Position 218 is a cysteine methyl ester (Cys-218). Residue Cys-218 is the site of S-geranylgeranyl cysteine attachment. The propeptide at 219–221 (IIN) is removed in mature form.

The protein belongs to the small GTPase superfamily. Rab family.

The protein localises to the cell membrane. The protein is Ras-related protein RabS (rabS) of Dictyostelium discoideum (Social amoeba).